We begin with the raw amino-acid sequence, 193 residues long: MSTMLIAVILLTLLALFFGVLLGFAALKFKVEGNPIVDELEAILPQTQCGQCGYPGCRPYAEAIANGDKVNKCPPGGTATMEKLASLMGVEPEPLNAEAQSQVKKVAYIREDECIGCTKCIQACPVDAIIGAGKLMHTVLTADCTGCDLCVEPCPVDCIDMVPVTQNLKNWNWRLNAIPVTLIQETPHEEKRG.

The tract at residues 1-26 (MSTMLIAVILLTLLALFFGVLLGFAA) is hydrophobic. Positions 32–90 (EGNPIVDELEAILPQTQCGQCGYPGCRPYAEAIANGDKVNKCPPGGTATMEKLASLMGV) constitute a 4Fe-4S domain. [4Fe-4S] cluster contacts are provided by Cys49, Cys52, Cys57, Cys73, Cys114, Cys117, Cys120, Cys124, Cys144, Cys147, Cys150, and Cys154. 2 consecutive 4Fe-4S ferredoxin-type domains span residues 105-134 (KVAYIREDECIGCTKCIQACPVDAIIGAGK) and 136-164 (MHTVLTADCTGCDLCVEPCPVDCIDMVPV).

The protein belongs to the 4Fe4S bacterial-type ferredoxin family. RnfB subfamily. As to quaternary structure, the complex is composed of six subunits: RnfA, RnfB, RnfC, RnfD, RnfE and RnfG. It depends on [4Fe-4S] cluster as a cofactor.

The protein localises to the cell inner membrane. Part of a membrane-bound complex that couples electron transfer with translocation of ions across the membrane. This is Ion-translocating oxidoreductase complex subunit B from Shewanella oneidensis (strain ATCC 700550 / JCM 31522 / CIP 106686 / LMG 19005 / NCIMB 14063 / MR-1).